The sequence spans 419 residues: MASTFSKLLTGRNASLLFATLGTGALTTGYLLNKQNVCAAAREQHKLFPPSADYPDLRKHNNCMAECLTPAIYAKLRNKVTPSGYTLDQCIQTGVDNPGHPFIKTVGMVAGDEESYEVFADLFDPVIKLRHNGYDPRVMKHPTDLDASKITQGQFDERYVLSSRVRTGRSIRGLSLPPACSRAELREVENVAITALEGLKGDLAGRYYKLSEMTEQDQQRLIDDHFLFDKPVSPLLTCAGMARDWPDARGIWHNYDKTFLIWINEEDHTRVISMEKGGNMKRVFERFCRGLKEVERLIQERGWEFMWNERLGYILTCPSNLGTGLRAGVHVRIPKLSKDPRFSKILENLRLQKRGTGGVDTAAVADVYDISNIDRIGRSEVELVQIVIDGVNYLVDCEKKLERGQDIKVPPPLPQFGKK.

A mitochondrion-targeting transit peptide spans 1–39 (MASTFSKLLTGRNASLLFATLGTGALTTGYLLNKQNVCA). Residues 40-64 (AAREQHKLFPPSADYPDLRKHNNCM) form a cardiolipin-binding region. The Phosphagen kinase N-terminal domain occupies 46 to 132 (KLFPPSADYP…FDPVIKLRHN (87 aa)). Positions 159–401 (YVLSSRVRTG…NYLVDCEKKL (243 aa)) constitute a Phosphagen kinase C-terminal domain. Residues 162 to 166 (SSRVR) and His225 each bind ATP. Phosphotyrosine is present on Tyr255. Residues Arg270, Arg326, 354–359 (RGTGGV), and Asp369 contribute to the ATP site. Thr356 is modified (phosphothreonine).

Belongs to the ATP:guanido phosphotransferase family. In terms of assembly, exists as an octamer composed of four CKMT2 homodimers.

It is found in the mitochondrion inner membrane. The catalysed reaction is creatine + ATP = N-phosphocreatine + ADP + H(+). Its function is as follows. Reversibly catalyzes the transfer of phosphate between ATP and various phosphogens (e.g. creatine phosphate). Creatine kinase isoenzymes play a central role in energy transduction in tissues with large, fluctuating energy demands, such as skeletal muscle, heart, brain and spermatozoa. The polypeptide is Creatine kinase S-type, mitochondrial (CKMT2) (Bos taurus (Bovine)).